Consider the following 380-residue polypeptide: Cytochrome b (380 aa).

Transmembrane regions (helical) follow at residues 34–54, 78–99, 114–134, and 179–199; these read FGSL…FLAM, WLLR…YFHI, WNIG…GYVL, and FFTF…IHLL. Histidine 84 and histidine 98 together coordinate heme b. Positions 183 and 197 each coordinate heme b. Histidine 202 is an a ubiquinone binding site. A run of 4 helical transmembrane segments spans residues 227 to 247, 289 to 309, 321 to 341, and 348 to 368; these read YKDL…STFA, LGGV…PIIH, IAKT…WIGG, and FITI…LLIP.

This sequence belongs to the cytochrome b family. The cytochrome bc1 complex contains 3 respiratory subunits (MT-CYB, CYC1 and UQCRFS1), 2 core proteins (UQCRC1 and UQCRC2) and probably 6 low-molecular weight proteins. It depends on heme b as a cofactor.

It localises to the mitochondrion inner membrane. Functionally, component of the ubiquinol-cytochrome c reductase complex (complex III or cytochrome b-c1 complex) that is part of the mitochondrial respiratory chain. The b-c1 complex mediates electron transfer from ubiquinol to cytochrome c. Contributes to the generation of a proton gradient across the mitochondrial membrane that is then used for ATP synthesis. The protein is Cytochrome b (mt-cyb) of Pelophylax nigromaculatus (Black-spotted frog).